A 128-amino-acid polypeptide reads, in one-letter code: Cytochrome c-type biogenesis protein CcmE (128 aa).

Topologically, residues 1–7 are cytoplasmic; sequence MKKKHKR. A helical; Signal-anchor for type II membrane protein membrane pass occupies residues 8 to 28; that stretch reads LLVASGIFFFLNCIVFFILTI. Over 29–128 the chain is Extracellular; the sequence is LRENISFFYT…KHDENYMPRK (100 aa). Positions 120 and 124 each coordinate heme.

This sequence belongs to the CcmE/CycJ family.

The protein localises to the cell membrane. In terms of biological role, heme chaperone required for the biogenesis of c-type cytochromes. Transiently binds heme delivered by CcmC and transfers the heme to apo-cytochromes in a process facilitated by CcmF and CcmH. The polypeptide is Cytochrome c-type biogenesis protein CcmE (Wolbachia sp. subsp. Brugia malayi (strain TRS)).